We begin with the raw amino-acid sequence, 251 residues long: Hydroxyacylglutathione hydrolase (251 aa).

His-53, His-55, Asp-57, His-58, His-110, Asp-127, and His-165 together coordinate Zn(2+).

Belongs to the metallo-beta-lactamase superfamily. Glyoxalase II family. Monomer. Zn(2+) serves as cofactor.

The enzyme catalyses an S-(2-hydroxyacyl)glutathione + H2O = a 2-hydroxy carboxylate + glutathione + H(+). It functions in the pathway secondary metabolite metabolism; methylglyoxal degradation; (R)-lactate from methylglyoxal: step 2/2. Functionally, thiolesterase that catalyzes the hydrolysis of S-D-lactoyl-glutathione to form glutathione and D-lactic acid. This is Hydroxyacylglutathione hydrolase from Salmonella paratyphi A (strain ATCC 9150 / SARB42).